Consider the following 23-residue polypeptide: GLWQKIKNAAGDLASGIVEGIKS.

In terms of tissue distribution, expressed by the skin parotoid and/or rostral glands.

The protein resides in the secreted. Its function is as follows. Antibacterial peptide, that adopts an alpha helical conformation which can disrupt bacterial membranes. Each caerin displays a different antimicrobial specificity. The polypeptide is Caerin-4.3 (Ranoidea caerulea (Green tree frog)).